The primary structure comprises 264 residues: Phosphonoacetaldehyde hydrolase (264 aa).

The active-site Nucleophile is Asp9. Residues Asp9 and Ala11 each contribute to the Mg(2+) site. Lys50 (schiff-base intermediate with substrate) is an active-site residue. Asp183 contacts Mg(2+).

This sequence belongs to the HAD-like hydrolase superfamily. PhnX family. Homodimer. It depends on Mg(2+) as a cofactor.

It carries out the reaction phosphonoacetaldehyde + H2O = acetaldehyde + phosphate + H(+). Functionally, involved in phosphonate degradation. The chain is Phosphonoacetaldehyde hydrolase from Bacillus cereus (strain ATCC 10987 / NRS 248).